Consider the following 592-residue polypeptide: Probable oxidoreductase EphD (592 aa).

The AB hydrolase-1 domain maps to 30–286; it reads PTVVLVHGFP…KAGHFSPMSH (257 aa). A substrate-binding site is contributed by serine 461. The active-site Proton acceptor is the tyrosine 474.

Belongs to the short-chain dehydrogenases/reductases (SDR) family.

The sequence is that of Probable oxidoreductase EphD (ephD) from Mycobacterium bovis (strain ATCC BAA-935 / AF2122/97).